Consider the following 572-residue polypeptide: Protein IQ-DOMAIN 30 (572 aa).

Residues 75–96 (SDDEIQVSEVQPTDSQDVASVP) are disordered. Over residues 82–92 (SEVQPTDSQDV) the composition is skewed to polar residues. 2 IQ domains span residues 108 to 136 (QEIAAVTVQAAYRGYLARRAFKILKGIIR) and 137 to 154 (LQALIRGHMVRRQAVSTL). The segment at 159-178 (GIVRLQALARGREIRHSDIG) is calmodulin-binding. Disordered regions lie at residues 282–332 (RPKK…MDNP) and 399–572 (IQTH…EWKR). Polar residues-rich tracts occupy residues 291 to 305 (PSSNLDNSSVAQTSS) and 400 to 419 (QTHTPLGTNESLDSTLVNQI). Positions 428 to 455 (AEEKEDVKEERTPKQNHKENSAGKENQK) are enriched in basic and acidic residues. 3 stretches are compositionally biased toward polar residues: residues 459 to 493 (KASSVTATQTAEFQESGNGNQTSSPGIPSYMQATK), 502 to 514 (QGSSSPRQLGTTE), and 522 to 560 (LPSSGNSAKITSHSPKTRVSNSSGKSGNKTEKTLLSSRE).

Belongs to the IQD family. Binds to multiple calmodulin (CaM) in the presence of Ca(2+) and CaM-like proteins.

The protein resides in the nucleus envelope. The protein localises to the cytoplasm. It localises to the cytoskeleton. Its function is as follows. May be involved in cooperative interactions with calmodulins or calmodulin-like proteins. Recruits calmodulin proteins to microtubules, thus being a potential scaffold in cellular signaling and trafficking. May associate with nucleic acids and regulate gene expression at the transcriptional or post-transcriptional level. This is Protein IQ-DOMAIN 30 from Arabidopsis thaliana (Mouse-ear cress).